A 43-amino-acid polypeptide reads, in one-letter code: Protein PsbN (43 aa).

The helical transmembrane segment at 5–27 (TLFAISISCLLVSFTGYALYTAF) threads the bilayer.

The protein belongs to the PsbN family.

It is found in the plastid. The protein localises to the chloroplast thylakoid membrane. May play a role in photosystem I and II biogenesis. This Thuja plicata (Western red-cedar) protein is Protein PsbN.